A 795-amino-acid chain; its full sequence is Phenylalanine--tRNA ligase beta subunit (795 aa).

Positions Ala39–Arg148 constitute a tRNA-binding domain. The B5 domain occupies Pro401–Ala476. Mg(2+)-binding residues include Asp454, Asp460, Glu463, and Glu464. Positions Ser701 to Arg794 constitute an FDX-ACB domain.

Belongs to the phenylalanyl-tRNA synthetase beta subunit family. Type 1 subfamily. As to quaternary structure, tetramer of two alpha and two beta subunits. Mg(2+) is required as a cofactor.

It is found in the cytoplasm. It catalyses the reaction tRNA(Phe) + L-phenylalanine + ATP = L-phenylalanyl-tRNA(Phe) + AMP + diphosphate + H(+). This is Phenylalanine--tRNA ligase beta subunit from Idiomarina loihiensis (strain ATCC BAA-735 / DSM 15497 / L2-TR).